Reading from the N-terminus, the 157-residue chain is Ciliary microtubule inner protein 5 (157 aa).

Disordered stretches follow at residues 1 to 57 (MGSR…SALG) and 92 to 124 (DPMG…AVGS). Basic and acidic residues predominate over residues 92–109 (DPMGNKKEPVKLPDHVPR).

The protein localises to the cell projection. It is found in the cilium. In Bos taurus (Bovine), this protein is Ciliary microtubule inner protein 5 (CIMIP5).